Here is a 150-residue protein sequence, read N- to C-terminus: Ribosomal RNA large subunit methyltransferase H (150 aa).

Residues Ala100 and 118–123 (LSEMTF) contribute to the S-adenosyl-L-methionine site.

This sequence belongs to the RNA methyltransferase RlmH family. In terms of assembly, homodimer.

The protein localises to the cytoplasm. It carries out the reaction pseudouridine(1915) in 23S rRNA + S-adenosyl-L-methionine = N(3)-methylpseudouridine(1915) in 23S rRNA + S-adenosyl-L-homocysteine + H(+). Its function is as follows. Specifically methylates the pseudouridine at position 1915 (m3Psi1915) in 23S rRNA. The sequence is that of Ribosomal RNA large subunit methyltransferase H from Helicobacter pylori (strain HPAG1).